A 225-amino-acid chain; its full sequence is MTQQTTPDDLSQSFIRFALDAGVLSFGEFVTKAGRKSPYFFNAGLFNQGAMLGQVAQFYAKTLLESGVQFDVLFGPAYKGITLASATAVALAGMGRDVGFSYNRKEAKDHGEGGTLVGAKLQGKVVIIDDVISAGTSVRESMQLIRAAGAEPAAVLIALDRMEKSGTADNIGTHSAVQDVQREYGIPVIAIATLKDLLAYLDASKDPSLGNSREAVAAYRQKYGV.

Lys-32 contributes to the 5-phospho-alpha-D-ribose 1-diphosphate binding site. 40 to 41 contributes to the orotate binding site; sequence FF. 5-phospho-alpha-D-ribose 1-diphosphate contacts are provided by residues 78–79, Arg-104, Lys-105, Lys-108, His-110, and 129–137; these read YK and DDVISAGTS. Ser-133 and Arg-161 together coordinate orotate.

The protein belongs to the purine/pyrimidine phosphoribosyltransferase family. PyrE subfamily. In terms of assembly, homodimer. It depends on Mg(2+) as a cofactor.

It catalyses the reaction orotidine 5'-phosphate + diphosphate = orotate + 5-phospho-alpha-D-ribose 1-diphosphate. It functions in the pathway pyrimidine metabolism; UMP biosynthesis via de novo pathway; UMP from orotate: step 1/2. Functionally, catalyzes the transfer of a ribosyl phosphate group from 5-phosphoribose 1-diphosphate to orotate, leading to the formation of orotidine monophosphate (OMP). The chain is Orotate phosphoribosyltransferase from Cupriavidus metallidurans (strain ATCC 43123 / DSM 2839 / NBRC 102507 / CH34) (Ralstonia metallidurans).